Here is a 246-residue protein sequence, read N- to C-terminus: MEIIPAIDLQNGEAVRLYKGDYDKKTVYSKNPLEIAQKFEQMGAKYLHLVDLDGAKLGQTRNLEIVRKIKDQTNLKIEIGGGIRNLDTVSLYLEQIGVERVILGTAAAEKPDFLKELLVKYGLSRIVVGVDIREGFVSTSGWLEKTTLPYLSFLKDLEKIGVKTVIVTDISKDGTLTGPNFELYDEISKETSLDVIVSGGVKDSSDIQRAADSDFYGIIVGKAYYEGKINLEKEFNHANKKNYPLS.

The active-site Proton acceptor is the Asp-8. Asp-131 functions as the Proton donor in the catalytic mechanism.

Belongs to the HisA/HisF family.

The protein localises to the cytoplasm. The catalysed reaction is 1-(5-phospho-beta-D-ribosyl)-5-[(5-phospho-beta-D-ribosylamino)methylideneamino]imidazole-4-carboxamide = 5-[(5-phospho-1-deoxy-D-ribulos-1-ylimino)methylamino]-1-(5-phospho-beta-D-ribosyl)imidazole-4-carboxamide. The protein operates within amino-acid biosynthesis; L-histidine biosynthesis; L-histidine from 5-phospho-alpha-D-ribose 1-diphosphate: step 4/9. The chain is 1-(5-phosphoribosyl)-5-[(5-phosphoribosylamino)methylideneamino] imidazole-4-carboxamide isomerase from Lactococcus lactis subsp. cremoris (strain SK11).